The primary structure comprises 235 residues: Glucosamine-6-phosphate deaminase (235 aa).

D62 (proton acceptor; for enolization step) is an active-site residue. N128 serves as the catalytic For ring-opening step. The active-site Proton acceptor; for ring-opening step is the H130. The For ring-opening step role is filled by E135.

This sequence belongs to the glucosamine/galactosamine-6-phosphate isomerase family. NagB subfamily.

The catalysed reaction is alpha-D-glucosamine 6-phosphate + H2O = beta-D-fructose 6-phosphate + NH4(+). It participates in amino-sugar metabolism; N-acetylneuraminate degradation; D-fructose 6-phosphate from N-acetylneuraminate: step 5/5. Functionally, catalyzes the reversible isomerization-deamination of glucosamine 6-phosphate (GlcN6P) to form fructose 6-phosphate (Fru6P) and ammonium ion. This is Glucosamine-6-phosphate deaminase from Streptococcus pneumoniae (strain JJA).